The sequence spans 497 residues: Glycerol kinase (497 aa).

Thr11 contacts ADP. Residues Thr11, Ser12, and Ser13 each coordinate ATP. Thr11 is a binding site for sn-glycerol 3-phosphate. Arg15 contacts ADP. Positions 81, 82, 133, and 242 each coordinate sn-glycerol 3-phosphate. Glycerol is bound by residues Arg81, Glu82, Tyr133, Asp242, and Gln243. ADP contacts are provided by Thr264 and Gly307. The ATP site is built by Thr264, Gly307, Gln311, and Gly412. ADP-binding residues include Gly412 and Asn416.

The protein belongs to the FGGY kinase family.

It catalyses the reaction glycerol + ATP = sn-glycerol 3-phosphate + ADP + H(+). It functions in the pathway polyol metabolism; glycerol degradation via glycerol kinase pathway; sn-glycerol 3-phosphate from glycerol: step 1/1. Its activity is regulated as follows. Inhibited by fructose 1,6-bisphosphate (FBP). Functionally, key enzyme in the regulation of glycerol uptake and metabolism. Catalyzes the phosphorylation of glycerol to yield sn-glycerol 3-phosphate. In Variovorax paradoxus (strain S110), this protein is Glycerol kinase.